The sequence spans 325 residues: Flavin-dependent thymidylate synthase (325 aa).

Positions 12-267 constitute a ThyX domain; the sequence is ISVRLLEYTG…PRLFRWAGPS (256 aa). FAD contacts are provided by residues serine 65, 89–91, and glutamine 97; that span reads RHR. Residues 86–89 and 97–101 each bind dUMP; these read QLVR and QLSHR. The ThyX motif motif lies at 89 to 99; it reads RHRVASYTQLS. The insert stretch occupies residues 110–159; that stretch reads AALKACESIGLDCPSKPAETEGGRKAAYRLYSQALERAARDFGASERFAI. Arginine 205 is a dUMP binding site. 221–223 is a binding site for FAD; that stretch reads NAR. Arginine 233 serves as a coordination point for dUMP. The Involved in ionization of N3 of dUMP, leading to its activation role is filled by arginine 233.

The protein belongs to the thymidylate synthase ThyX family. As to quaternary structure, homotetramer. The cofactor is FAD.

It carries out the reaction dUMP + (6R)-5,10-methylene-5,6,7,8-tetrahydrofolate + NADPH + H(+) = dTMP + (6S)-5,6,7,8-tetrahydrofolate + NADP(+). Its pathway is pyrimidine metabolism; dTTP biosynthesis. In terms of biological role, catalyzes the reductive methylation of 2'-deoxyuridine-5'-monophosphate (dUMP) to 2'-deoxythymidine-5'-monophosphate (dTMP) while utilizing 5,10-methylenetetrahydrofolate (mTHF) as the methyl donor, and NADPH and FADH(2) as the reductant. In Aeropyrum pernix (strain ATCC 700893 / DSM 11879 / JCM 9820 / NBRC 100138 / K1), this protein is Flavin-dependent thymidylate synthase.